A 416-amino-acid polypeptide reads, in one-letter code: Multifunctional CCA protein (416 aa).

ATP contacts are provided by glycine 8 and arginine 11. Glycine 8 and arginine 11 together coordinate CTP. Positions 21 and 23 each coordinate Mg(2+). ATP contacts are provided by arginine 91, arginine 137, and arginine 140. Residues arginine 91, arginine 137, and arginine 140 each contribute to the CTP site. An HD domain is found at 228–329 (TGVHTLMVLA…VKIFDKADFW (102 aa)).

It belongs to the tRNA nucleotidyltransferase/poly(A) polymerase family. Bacterial CCA-adding enzyme type 1 subfamily. As to quaternary structure, monomer. Can also form homodimers and oligomers. Mg(2+) serves as cofactor. It depends on Ni(2+) as a cofactor.

It carries out the reaction a tRNA precursor + 2 CTP + ATP = a tRNA with a 3' CCA end + 3 diphosphate. The catalysed reaction is a tRNA with a 3' CCA end + 2 CTP + ATP = a tRNA with a 3' CCACCA end + 3 diphosphate. Its function is as follows. Catalyzes the addition and repair of the essential 3'-terminal CCA sequence in tRNAs without using a nucleic acid template. Adds these three nucleotides in the order of C, C, and A to the tRNA nucleotide-73, using CTP and ATP as substrates and producing inorganic pyrophosphate. tRNA 3'-terminal CCA addition is required both for tRNA processing and repair. Also involved in tRNA surveillance by mediating tandem CCA addition to generate a CCACCA at the 3' terminus of unstable tRNAs. While stable tRNAs receive only 3'-terminal CCA, unstable tRNAs are marked with CCACCA and rapidly degraded. This is Multifunctional CCA protein from Shewanella baltica (strain OS195).